Reading from the N-terminus, the 265-residue chain is Gap junction beta-4 protein (265 aa).

The stretch at 2–13 (NWGFLQGILSGV) is an intramembrane region. At 14–20 (NKYSTAL) the chain is on the cytoplasmic side. The helical transmembrane segment at 21–40 (GRIWLSVVFIFRVLVYVVAA) threads the bilayer. At 41–73 (EEVWDDEQKDFICNTKQPGCPNVCYDEFFPVSH) the chain is on the extracellular side. Intrachain disulfides connect Cys53-Cys175, Cys60-Cys169, and Cys64-Cys164. The chain crosses the membrane as a helical span at residues 74–94 (VRLWALQLILVTCPSLLVVMH). The Cytoplasmic portion of the chain corresponds to 95-130 (VAYREERERKHRLKHGPDAPALYSNLSKKRGGLWWT). A helical transmembrane segment spans residues 131–151 (YLLSLIFKAAVDSGFLYIFHC). The Extracellular portion of the chain corresponds to 152-184 (IYKDYDMPRVVACSVQPCPHTVDCYISRPTEKK). The helical transmembrane segment at 185 to 205 (VFTYFMVVTAAICILLNLSEV) threads the bilayer. The Cytoplasmic portion of the chain corresponds to 206-265 (AYLVGKRCMEVFRPRRQKTSRRHQLPDTCPPYVISKGHPQDESTVLTKAGMATVDAGVYP).

The protein belongs to the connexin family. Beta-type (group I) subfamily. As to quaternary structure, a hemichannel or connexon is composed of a hexamer of connexins. A functional gap junction is formed by the apposition of two hemichannels. Forms heteromeric channels with GJB2. As to expression, detected in adult heart, kidney, skin and cochlea, where it is detected in spiral ganglion, stria vascularis, spiral limbus and spiral ligament (at protein level).

It localises to the cell membrane. The protein localises to the cell junction. It is found in the gap junction. In terms of biological role, structural component of gap junctions. Gap junctions are dodecameric channels that connect the cytoplasm of adjoining cells. They are formed by the docking of two hexameric hemichannels, one from each cell membrane. Small molecules and ions diffuse from one cell to a neighboring cell via the central pore. This Rattus norvegicus (Rat) protein is Gap junction beta-4 protein (Gjb4).